Reading from the N-terminus, the 623-residue chain is Cell pattern formation-associated protein stuA (623 aa).

The segment covering 13-31 (QHMQSAGQPQQPQTVTSGP) has biased composition (polar residues). A disordered region spans residues 13 to 111 (QHMQSAGQPQ…DTTGQHPPPG (99 aa)). Residues 115-221 (RVTATLWEDE…HNIGALLYHP (107 aa)) enclose the HTH APSES-type domain. Positions 149–170 (GTKLLNVAGMTRGRRDGILKSE) form a DNA-binding region, H-T-H motif. Disordered stretches follow at residues 232 to 270 (AAAE…PQSS) and 332 to 623 (ARSM…PRQR). A compositionally biased stretch (polar residues) spans 335–374 (MPTTPATTPPGSMQPYGSAQSFDGSRQQMYNAPSQQSPYP). Residues 396-408 (GPPSSRPSGSAPS) are compositionally biased toward low complexity. The segment covering 423–446 (EHGHQSHAGEEDGEHEQHDAEYTH) has biased composition (basic and acidic residues). Residues 542 to 553 (APPADMANPMPN) show a composition bias toward low complexity. The interval 569–594 (KRGREGDDDLSRPVGDVPGMDMKRRK) is nuclear localization domain. Residues 570 to 579 (RGREGDDDLS) are compositionally biased toward basic and acidic residues.

It belongs to the EFG1/PHD1/stuA family.

The protein localises to the nucleus. In terms of biological role, transcription factor that regulates asexual reproduction. Binds the StuA-response elements (StRE) with the consensus sequence 5'-(A/T)CGCG(T/A)N(A/C)-3' at the promoters of target genes. Controls conidiation by positively regulating the expression of brlA and abaA. Positively regulates the cephalosporin biosynthesis gene cluster. Also involved hyphal fragmentation and cell wall integrity. This chain is Cell pattern formation-associated protein stuA, found in Hapsidospora chrysogenum (strain ATCC 11550 / CBS 779.69 / DSM 880 / IAM 14645 / JCM 23072 / IMI 49137) (Acremonium chrysogenum).